The primary structure comprises 335 residues: Nucleoid-associated protein YejK (335 aa).

The protein belongs to the YejK family.

Its subcellular location is the cytoplasm. It localises to the nucleoid. This chain is Nucleoid-associated protein YejK, found in Shigella flexneri.